Consider the following 98-residue polypeptide: DNA-binding protein Fis (98 aa).

A DNA-binding region (H-T-H motif) is located at residues 74–93 (QTRAATMMGINRGTLRKKLK).

Belongs to the transcriptional regulatory Fis family. Homodimer.

Functionally, activates ribosomal RNA transcription. Plays a direct role in upstream activation of rRNA promoters. This Vibrio atlanticus (strain LGP32) (Vibrio splendidus (strain Mel32)) protein is DNA-binding protein Fis.